Reading from the N-terminus, the 328-residue chain is 4-hydroxythreonine-4-phosphate dehydrogenase (328 aa).

Residues His135 and Thr136 each contribute to the substrate site. Residues His165, His210, and His265 each contribute to the a divalent metal cation site. Positions 273, 282, and 291 each coordinate substrate.

The protein belongs to the PdxA family. Homodimer. Zn(2+) serves as cofactor. The cofactor is Mg(2+). Requires Co(2+) as cofactor.

Its subcellular location is the cytoplasm. The enzyme catalyses 4-(phosphooxy)-L-threonine + NAD(+) = 3-amino-2-oxopropyl phosphate + CO2 + NADH. It participates in cofactor biosynthesis; pyridoxine 5'-phosphate biosynthesis; pyridoxine 5'-phosphate from D-erythrose 4-phosphate: step 4/5. Functionally, catalyzes the NAD(P)-dependent oxidation of 4-(phosphooxy)-L-threonine (HTP) into 2-amino-3-oxo-4-(phosphooxy)butyric acid which spontaneously decarboxylates to form 3-amino-2-oxopropyl phosphate (AHAP). This chain is 4-hydroxythreonine-4-phosphate dehydrogenase, found in Pseudomonas aeruginosa (strain ATCC 15692 / DSM 22644 / CIP 104116 / JCM 14847 / LMG 12228 / 1C / PRS 101 / PAO1).